Consider the following 200-residue polypeptide: Inner membrane-spanning protein YciB (200 aa).

A run of 6 helical transmembrane segments spans residues 1–21 (MPPL…FFAN), 37–57 (IGAP…IALA), 66–86 (LPIM…LTLW), 103–123 (LFGG…GYVF), 136–156 (KLTL…EIVW), and 167–187 (FKVW…MPLI).

It belongs to the YciB family.

It localises to the cell inner membrane. In terms of biological role, plays a role in cell envelope biogenesis, maintenance of cell envelope integrity and membrane homeostasis. The polypeptide is Inner membrane-spanning protein YciB (Brucella suis biovar 1 (strain 1330)).